A 251-amino-acid polypeptide reads, in one-letter code: MLKKAVGIVIRRVAYGDNHLIITFLNEAGVKVALMARNARKSTKYGSGLDLFYENLFIFSQFKGMGTLSSVDTINSHYEIREDIYVMTYAQYVVELIDRALEEDETNPYAYQLLKVALTHMERSDKARLIALLVSIKCMPLYGYVPNFKYSTYDGNMTHKDFIAYSFQFNSVVTQEALIEDPHAIPMTNKSLYMLYLLSEVPIESLSSINIEQSLIDEMETLVYKMYDEFIGVFIKSRKILEQMRRLDNYK.

It belongs to the RecO family.

Its function is as follows. Involved in DNA repair and RecF pathway recombination. In Macrococcus caseolyticus (strain JCSC5402) (Macrococcoides caseolyticum), this protein is DNA repair protein RecO.